Reading from the N-terminus, the 123-residue chain is Large ribosomal subunit protein bL12 (123 aa).

It belongs to the bacterial ribosomal protein bL12 family. Homodimer. Part of the ribosomal stalk of the 50S ribosomal subunit. Forms a multimeric L10(L12)X complex, where L10 forms an elongated spine to which 2 to 4 L12 dimers bind in a sequential fashion. Binds GTP-bound translation factors.

In terms of biological role, forms part of the ribosomal stalk which helps the ribosome interact with GTP-bound translation factors. Is thus essential for accurate translation. In Metamycoplasma arthritidis (strain 158L3-1) (Mycoplasma arthritidis), this protein is Large ribosomal subunit protein bL12.